We begin with the raw amino-acid sequence, 962 residues long: Translation initiation factor IF-2 (962 aa).

A disordered region spans residues 99–365 (VKAAQTQAAP…GKKGKKLKLE (267 aa)). The segment covering 117–141 (DAAKARAEAAARAEARAKAEAEAAK) has biased composition (basic and acidic residues). Over residues 145–155 (AKAGNKAKPAA) the composition is skewed to low complexity. Residues 173 to 216 (KPAEESKAEKAQADKMPSKKPAEPKEKAAKPKHERNGKGKDAKK) show a composition bias toward basic and acidic residues. Residues 219-234 (KPAAPAVPQPVVSAEE) are compositionally biased toward low complexity. Basic and acidic residues predominate over residues 235-269 (QAQRDEEARRAAALRAHQEALLKEKQERQARREAM). Residues 270 to 283 (KQQAEQQAKAAQEA) are compositionally biased toward low complexity. Residues 338-354 (GGRDRNNARNGDDERVR) are compositionally biased toward basic and acidic residues. The region spanning 462–631 (PRPPVVTVMG…LLEAEVLELT (170 aa)) is the tr-type G domain. Positions 471–478 (GHVDHGKT) are G1. 471 to 478 (GHVDHGKT) lines the GTP pocket. Positions 496 to 500 (GITQH) are G2. Residues 517–520 (DTPG) are G3. Residues 517–521 (DTPGH) and 571–574 (NKID) each bind GTP. Positions 571–574 (NKID) are G4. The tract at residues 607 to 609 (SAK) is G5.

The protein belongs to the TRAFAC class translation factor GTPase superfamily. Classic translation factor GTPase family. IF-2 subfamily.

The protein localises to the cytoplasm. One of the essential components for the initiation of protein synthesis. Protects formylmethionyl-tRNA from spontaneous hydrolysis and promotes its binding to the 30S ribosomal subunits. Also involved in the hydrolysis of GTP during the formation of the 70S ribosomal complex. The chain is Translation initiation factor IF-2 from Neisseria meningitidis serogroup C (strain 053442).